The following is a 314-amino-acid chain: Mycothiol acetyltransferase (314 aa).

Glu-39 is a 1D-myo-inositol 2-(L-cysteinylamino)-2-deoxy-alpha-D-glucopyranoside binding site. 80–82 (LTA) provides a ligand contact to acetyl-CoA. Positions 159–313 (FVCRRFDPIS…PTGELGHEPP (155 aa)) constitute an N-acetyltransferase domain. 3 residues coordinate 1D-myo-inositol 2-(L-cysteinylamino)-2-deoxy-alpha-D-glucopyranoside: Glu-186, Lys-228, and Glu-237. Acetyl-CoA is bound by residues 241-243 (LGV) and 248-254 (QGQGVGR). Residue Tyr-275 participates in 1D-myo-inositol 2-(L-cysteinylamino)-2-deoxy-alpha-D-glucopyranoside binding.

The protein belongs to the acetyltransferase family. MshD subfamily. Monomer.

The catalysed reaction is 1D-myo-inositol 2-(L-cysteinylamino)-2-deoxy-alpha-D-glucopyranoside + acetyl-CoA = mycothiol + CoA + H(+). Catalyzes the transfer of acetyl from acetyl-CoA to desacetylmycothiol (Cys-GlcN-Ins) to form mycothiol. The chain is Mycothiol acetyltransferase from Jonesia denitrificans (strain ATCC 14870 / DSM 20603 / BCRC 15368 / CIP 55.134 / JCM 11481 / NBRC 15587 / NCTC 10816 / Prevot 55134) (Listeria denitrificans).